Reading from the N-terminus, the 473-residue chain is Phosphatidylserine synthase 1 (473 aa).

An N-acetylalanine modification is found at alanine 2. The Cytoplasmic segment spans residues 2 to 35; sequence ASCVGSRTLSKDDVNYRMHFRMINEQQVEDITID. Residues 36–56 traverse the membrane as a helical segment; it reads FFYRPHTITLLSFTIISLMYF. Topologically, residues 57 to 72 are lumenal; it reads AFTRDDCVPEDNIWRG. Residues 73 to 93 form a helical membrane-spanning segment; it reads ILSVIFFFLIISVLAFPNGPF. Topologically, residues 94–102 are cytoplasmic; that stretch reads TRPHPALWR. Residues 103–123 form a helical membrane-spanning segment; that stretch reads MVFGLSVLYFLFLVFLLFLNF. Over 124–186 the chain is Lumenal; it reads EQVKSLMYWL…AMKALLIRSY (63 aa). The chain crosses the membrane as a helical span at residues 187–207; the sequence is GLCWTISITWELTELFFMHLL. Over 208–216 the chain is Cytoplasmic; the sequence is PNFAECWWD. The chain crosses the membrane as a helical span at residues 217–237; the sequence is QVILDILLCNGGGIWLGMVVC. Over 238–286 the chain is Lumenal; sequence RFLEMRTYHWASFKDIHTTTGKIKRAVLQFTPASWTYVRWFDPKSSFQR. The chain crosses the membrane as a helical span at residues 287 to 307; the sequence is VAGIYLFMIIWQLTELNTFFL. At 308 to 319 the chain is on the cytoplasmic side; the sequence is KHIFVFQASHPL. A helical transmembrane segment spans residues 320–342; sequence SWCRILFIGCITAPTVRQYYAYL. Topologically, residues 343–355 are lumenal; sequence TDTQCKRVGTQCW. Residues 356-376 form a helical membrane-spanning segment; it reads VFGVIGFLEAIVCIKFGQDLF. The Cytoplasmic segment spans residues 377–383; that stretch reads SKTQILY. Residues 384-404 traverse the membrane as a helical segment; that stretch reads VVLWLLCVAFTTFLCLYGMVW. Topologically, residues 405 to 473 are lumenal; the sequence is YAEHYGHREK…SKVTNGVGKK (69 aa). Serine 417, serine 425, serine 442, and serine 454 each carry phosphoserine. Residues 430–473 form a disordered region; that stretch reads WYHGKGSKGSEDSPPKHSNNNESHSSRRRNRHSKSKVTNGVGKK. Residues 455–464 show a composition bias toward basic residues; that stretch reads SRRRNRHSKS.

The protein belongs to the phosphatidyl serine synthase family.

It is found in the endoplasmic reticulum membrane. It carries out the reaction a 1,2-diacyl-sn-glycero-3-phosphoethanolamine + L-serine = a 1,2-diacyl-sn-glycero-3-phospho-L-serine + ethanolamine. It catalyses the reaction a 1,2-diacyl-sn-glycero-3-phosphocholine + L-serine = a 1,2-diacyl-sn-glycero-3-phospho-L-serine + choline. Its pathway is phospholipid metabolism; phosphatidylserine biosynthesis. In terms of biological role, catalyzes a base-exchange reaction in which the polar head group of phosphatidylethanolamine (PE) or phosphatidylcholine (PC) is replaced by L-serine. Catalyzes mainly the conversion of phosphatidylcholine but also converts, in vitro and to a lesser extent, phosphatidylethanolamine. The chain is Phosphatidylserine synthase 1 (Ptdss1) from Rattus norvegicus (Rat).